We begin with the raw amino-acid sequence, 229 residues long: Peptidase E (229 aa).

Catalysis depends on charge relay system residues serine 120, aspartate 135, and histidine 157.

This sequence belongs to the peptidase S51 family.

It is found in the cytoplasm. It catalyses the reaction Dipeptidase E catalyzes the hydrolysis of dipeptides Asp-|-Xaa. It does not act on peptides with N-terminal Glu, Asn or Gln, nor does it cleave isoaspartyl peptides.. Functionally, hydrolyzes dipeptides containing N-terminal aspartate residues. May play a role in allowing the cell to use peptide aspartate to spare carbon otherwise required for the synthesis of the aspartate family of amino acids. This chain is Peptidase E, found in Citrobacter koseri (strain ATCC BAA-895 / CDC 4225-83 / SGSC4696).